We begin with the raw amino-acid sequence, 83 residues long: Small ribosomal subunit protein bS16 (83 aa).

It belongs to the bacterial ribosomal protein bS16 family.

This chain is Small ribosomal subunit protein bS16, found in Pseudomonas entomophila (strain L48).